A 63-amino-acid polypeptide reads, in one-letter code: Large ribosomal subunit protein bL35 (63 aa).

Residues R24 to L44 are disordered.

Belongs to the bacterial ribosomal protein bL35 family.

The sequence is that of Large ribosomal subunit protein bL35 from Mycoplasma mycoides subsp. mycoides SC (strain CCUG 32753 / NCTC 10114 / PG1).